The sequence spans 243 residues: Pyridoxine 5'-phosphate synthase (243 aa).

Asn9 is a binding site for 3-amino-2-oxopropyl phosphate. 11–12 (DH) is a binding site for 1-deoxy-D-xylulose 5-phosphate. Arg20 contributes to the 3-amino-2-oxopropyl phosphate binding site. The active-site Proton acceptor is His45. Arg47 and His52 together coordinate 1-deoxy-D-xylulose 5-phosphate. Residue Glu72 is the Proton acceptor of the active site. Thr102 lines the 1-deoxy-D-xylulose 5-phosphate pocket. The Proton donor role is filled by His193. 3-amino-2-oxopropyl phosphate contacts are provided by residues Gly194 and 215-216 (GH).

This sequence belongs to the PNP synthase family. Homooctamer; tetramer of dimers.

Its subcellular location is the cytoplasm. The enzyme catalyses 3-amino-2-oxopropyl phosphate + 1-deoxy-D-xylulose 5-phosphate = pyridoxine 5'-phosphate + phosphate + 2 H2O + H(+). The protein operates within cofactor biosynthesis; pyridoxine 5'-phosphate biosynthesis; pyridoxine 5'-phosphate from D-erythrose 4-phosphate: step 5/5. In terms of biological role, catalyzes the complicated ring closure reaction between the two acyclic compounds 1-deoxy-D-xylulose-5-phosphate (DXP) and 3-amino-2-oxopropyl phosphate (1-amino-acetone-3-phosphate or AAP) to form pyridoxine 5'-phosphate (PNP) and inorganic phosphate. This is Pyridoxine 5'-phosphate synthase from Shigella boydii serotype 4 (strain Sb227).